The primary structure comprises 164 residues: Peptidyl-prolyl cis-trans isomerase A (164 aa).

Met1 carries the N-acetylmethionine modification. Val2 is modified (N-acetylvaline; in Peptidyl-prolyl cis-trans isomerase A, N-terminally processed). One can recognise a PPIase cyclophilin-type domain in the interval Phe7 to Gln163. Residue Lys28 is modified to N6-acetyllysine; alternate. A Glycyl lysine isopeptide (Lys-Gly) (interchain with G-Cter in SUMO2); alternate cross-link involves residue Lys28. Residue Lys28 forms a Glycyl lysine isopeptide (Lys-Gly) (interchain with G-Cter in ubiquitin); alternate linkage. Lys44 carries the post-translational modification N6-acetyllysine. A Phosphoserine modification is found at Ser77. The residue at position 82 (Lys82) is an N6-acetyllysine; alternate. Residue Lys82 forms a Glycyl lysine isopeptide (Lys-Gly) (interchain with G-Cter in SUMO2); alternate linkage. Residue Thr93 is modified to Phosphothreonine. Asn108 carries N-linked (GlcNAc...) asparagine glycosylation. N6-acetyllysine is present on residues Lys125, Lys131, and Lys133.

The protein belongs to the cyclophilin-type PPIase family. PPIase A subfamily. In terms of assembly, interacts with protein phosphatase PPP3CA/calcineurin A. Interacts with PRPF19 isoform 2 (via N-terminus). Interacts with isoform 2 of BSG/CD147. Interacts with FOXO1; the interaction promotes FOXO1 dephosphorylation, nuclear accumulation and transcriptional activity. Interacts with integrin ITGA2B:ITGB3; the interaction is ROS and peptidyl-prolyl cis-trans isomerase (PPIase) activity-dependent and is increased in the presence of thrombin. Interacts with MAP3K5. Interacts with TARDBP; the interaction is dependent on the RNA-binding activity of TARDBP and the PPIase activity of PPIA/CYPA and the acetylation of PPIA/CYPA at Lys-125 favors the interaction. Interacts with HNRNPA1, HNRNPA2B1, HNRNPC, RBMX, HNRNPK and HNRNPM. Post-translationally, acetylation at Lys-125 markedly inhibits catalysis of cis to trans isomerization. PPIA acetylation also antagonizes the immunosuppressive effects of cyclosporine by inhibiting the sequential steps of cyclosporine binding and calcineurin inhibition. Acetylation at Lys-125 favors the interaction with TARDBP.

Its subcellular location is the cytoplasm. The protein localises to the secreted. The protein resides in the nucleus. It catalyses the reaction [protein]-peptidylproline (omega=180) = [protein]-peptidylproline (omega=0). Binds cyclosporin A (CsA). CsA mediates some of its effects via an inhibitory action on PPIase. Functionally, catalyzes the cis-trans isomerization of proline imidic peptide bonds in oligopeptides. Exerts a strong chemotactic effect on leukocytes partly through activation of one of its membrane receptors BSG/CD147, initiating a signaling cascade that culminates in MAPK/ERK activation. Activates endothelial cells (ECs) in a proinflammatory manner by stimulating activation of NF-kappa-B and ERK, JNK and p38 MAP-kinases and by inducing expression of adhesion molecules including SELE and VCAM1. Induces apoptosis in ECs by promoting the FOXO1-dependent expression of CCL2 and BCL2L11 which are involved in EC chemotaxis and apoptosis. In response to oxidative stress, initiates proapoptotic and antiapoptotic signaling in ECs via activation of NF-kappa-B and AKT1 and up-regulation of antiapoptotic protein BCL2. Negatively regulates MAP3K5/ASK1 kinase activity, autophosphorylation and oxidative stress-induced apoptosis mediated by MAP3K5/ASK1. Necessary for the assembly of TARDBP in heterogeneous nuclear ribonucleoprotein (hnRNP) complexes and regulates TARDBP binding to RNA UG repeats and TARDBP-dependent expression of HDAC6, ATG7 and VCP which are involved in clearance of protein aggregates. Plays an important role in platelet activation and aggregation. Regulates calcium mobilization and integrin ITGA2B:ITGB3 bidirectional signaling via increased ROS production as well as by facilitating the interaction between integrin and the cell cytoskeleton. Binds heparan sulfate glycosaminoglycans. The sequence is that of Peptidyl-prolyl cis-trans isomerase A (PPIA) from Cricetulus griseus (Chinese hamster).